Consider the following 56-residue polypeptide: Large ribosomal subunit protein bL32 (56 aa).

Residues 1-16 show a composition bias toward basic residues; that stretch reads MAVQKNRKTRSKRGMR. The interval 1 to 37 is disordered; it reads MAVQKNRKTRSKRGMRRSHDALGTATMSVDSTSGETH. Positions 25–35 are enriched in polar residues; that stretch reads ATMSVDSTSGE.

Belongs to the bacterial ribosomal protein bL32 family.

The protein is Large ribosomal subunit protein bL32 of Pseudoalteromonas atlantica (strain T6c / ATCC BAA-1087).